Here is a 267-residue protein sequence, read N- to C-terminus: Digeranylgeranylglyceryl phosphate synthase (267 aa).

Helical transmembrane passes span 10-30 (ANCV…GALL), 33-53 (LHTP…GNAI), 80-100 (AALI…GLIN), 104-121 (LALA…AARL), 139-159 (TFLF…LSIL), 198-218 (VLAS…PLGI), and 247-267 (QRWI…GYHI).

This sequence belongs to the UbiA prenyltransferase family. DGGGP synthase subfamily. Requires Mg(2+) as cofactor.

The protein resides in the cell membrane. It catalyses the reaction sn-3-O-(geranylgeranyl)glycerol 1-phosphate + (2E,6E,10E)-geranylgeranyl diphosphate = 2,3-bis-O-(geranylgeranyl)-sn-glycerol 1-phosphate + diphosphate. The protein operates within membrane lipid metabolism; glycerophospholipid metabolism. Functionally, prenyltransferase that catalyzes the transfer of the geranylgeranyl moiety of geranylgeranyl diphosphate (GGPP) to the C2 hydroxyl of (S)-3-O-geranylgeranylglyceryl phosphate (GGGP). This reaction is the second ether-bond-formation step in the biosynthesis of archaeal membrane lipids. This is Digeranylgeranylglyceryl phosphate synthase from Methanothrix thermoacetophila (strain DSM 6194 / JCM 14653 / NBRC 101360 / PT) (Methanosaeta thermophila).